The sequence spans 599 residues: Probable acetolactate synthase large subunit (599 aa).

Thiamine diphosphate is bound at residue E47. FAD contacts are provided by residues R149, 258–279 (HGTK…IGCR), and 301–320 (DIDP…IVGD). The thiamine pyrophosphate binding stretch occupies residues 404–484 (QNQMWMAHYF…VVICIFDNRT (81 aa)). 2 residues coordinate Mg(2+): D455 and N482.

The protein belongs to the TPP enzyme family. Dimer of large and small chains. It depends on Mg(2+) as a cofactor. Requires thiamine diphosphate as cofactor.

It carries out the reaction 2 pyruvate + H(+) = (2S)-2-acetolactate + CO2. Its pathway is amino-acid biosynthesis; L-isoleucine biosynthesis; L-isoleucine from 2-oxobutanoate: step 1/4. It functions in the pathway amino-acid biosynthesis; L-valine biosynthesis; L-valine from pyruvate: step 1/4. This chain is Probable acetolactate synthase large subunit (ilvB), found in Methanococcus aeolicus.